The chain runs to 135 residues: Aspartate 1-decarboxylase (135 aa).

The active-site Schiff-base intermediate with substrate; via pyruvic acid is the Ser25. Ser25 bears the Pyruvic acid (Ser) mark. Thr57 is a substrate binding site. Residue Tyr58 is the Proton donor of the active site. Residue 73–75 (GSA) participates in substrate binding.

It belongs to the PanD family. Heterooctamer of four alpha and four beta subunits. Pyruvate serves as cofactor. Post-translationally, is synthesized initially as an inactive proenzyme, which is activated by self-cleavage at a specific serine bond to produce a beta-subunit with a hydroxyl group at its C-terminus and an alpha-subunit with a pyruvoyl group at its N-terminus.

The protein resides in the cytoplasm. The enzyme catalyses L-aspartate + H(+) = beta-alanine + CO2. It participates in cofactor biosynthesis; (R)-pantothenate biosynthesis; beta-alanine from L-aspartate: step 1/1. Catalyzes the pyruvoyl-dependent decarboxylation of aspartate to produce beta-alanine. This is Aspartate 1-decarboxylase from Albidiferax ferrireducens (strain ATCC BAA-621 / DSM 15236 / T118) (Rhodoferax ferrireducens).